A 389-amino-acid chain; its full sequence is Large envelope protein (389 aa).

Position 1 is an N-acetylmethionine (Met-1). Gly-2 carries the N-myristoyl glycine; by host lipid modification. The interval 2–108 (GQNLSVTNPL…PPLRDTHPQA (107 aa)) is pre-S1. Residues 2-163 (GQNLSVTNPL…FLKTGDPALN (162 aa)) form a pre-S region. At 2–170 (GQNLSVTNPL…ALNMESISSG (169 aa)) the chain is on the virion surface; in external conformation side. Topologically, residues 2-242 (GQNLSVTNPL…PGYRWMCLRR (241 aa)) are intravirion; in internal conformation. The tract at residues 78-105 (PAVPPPASTNRQSGRRPTPISPPLRDTH) is disordered. Positions 109 to 163 (MQWNSTVFHQALQDPRVRGLYFPAGGSSSGTVSPVPTTASPISSTFLKTGDPALN) are pre-S2. The helical transmembrane segment at 171 to 191 (FLGPLLVLQAGFFLLTKILTI) threads the bilayer. Topologically, residues 192-242 (PQSLDSWWTSLNFLGGAPVCPGQNSQSLTSNHSPTSCPPICPGYRWMCLRR) are intravirion; in external conformation. The chain crosses the membrane as a helical span at residues 243 to 263 (FIIFLFILLLCLIFLLVLLDY). Topologically, residues 264 to 337 (RGMLPVCPLL…WASVRFSWLN (74 aa)) are virion surface. Asn-309 is a glycosylation site (N-linked (GlcNAc...) asparagine; by host). The helical transmembrane segment at 338-358 (LLVPFVQWFAGLSPTVWLSVI) threads the bilayer. The Intravirion portion of the chain corresponds to 359 to 364 (WMIWYW). Residues 365–387 (GPSLYNILSPFIPLLPIFFCLWA) traverse the membrane as a helical segment. Residues 388–389 (YI) lie on the Virion surface side of the membrane.

The protein belongs to the orthohepadnavirus major surface antigen family. In terms of assembly, in its internal form (Li-HBsAg), interacts with the capsid protein and with the isoform S. Interacts with host chaperone CANX. Associates with host chaperone CANX through its pre-S2 N glycan; this association may be essential for isoform M proper secretion. As to quaternary structure, interacts with isoform L. Interacts with the antigens of satellite virus HDV (HDVAgs); this interaction is required for encapsidation of HDV genomic RNA. Isoform M is N-terminally acetylated by host at a ratio of 90%, and N-glycosylated by host at the pre-S2 region. Post-translationally, myristoylated.

It is found in the virion membrane. Functionally, the large envelope protein exists in two topological conformations, one which is termed 'external' or Le-HBsAg and the other 'internal' or Li-HBsAg. In its external conformation the protein attaches the virus to cell receptors and thereby initiating infection. This interaction determines the species specificity and liver tropism. This attachment induces virion internalization predominantly through caveolin-mediated endocytosis. The large envelope protein also assures fusion between virion membrane and endosomal membrane. In its internal conformation the protein plays a role in virion morphogenesis and mediates the contact with the nucleocapsid like a matrix protein. Its function is as follows. The middle envelope protein plays an important role in the budding of the virion. It is involved in the induction of budding in a nucleocapsid independent way. In this process the majority of envelope proteins bud to form subviral lipoprotein particles of 22 nm of diameter that do not contain a nucleocapsid. The sequence is that of Large envelope protein from Pongo pygmaeus (Bornean orangutan).